The primary structure comprises 315 residues: Large ribosomal subunit protein uL29m (315 aa).

The protein belongs to the universal ribosomal protein uL29 family. As to quaternary structure, component of the mitochondrial large ribosomal subunit. Mature mitochondrial ribosomes consist of a small (37S) and a large (54S) subunit. The 37S subunit contains at least 33 different proteins and 1 molecule of RNA (15S). The 54S subunit contains at least 45 different proteins and 1 molecule of RNA (21S).

Its subcellular location is the mitochondrion. This chain is Large ribosomal subunit protein uL29m (MRPL4), found in Candida glabrata (strain ATCC 2001 / BCRC 20586 / JCM 3761 / NBRC 0622 / NRRL Y-65 / CBS 138) (Yeast).